The chain runs to 98 residues: Protein translation factor SUI1 homolog (98 aa).

Belongs to the SUI1 family.

The chain is Protein translation factor SUI1 homolog from Pyrococcus furiosus (strain ATCC 43587 / DSM 3638 / JCM 8422 / Vc1).